The primary structure comprises 508 residues: Photosystem II CP47 reaction center protein (508 aa).

The next 6 helical transmembrane spans lie at 21–36, 101–115, 140–156, 203–218, 237–252, and 457–472; these read SVHI…WAGS, IVFS…IWHW, GIHL…FGAF, IAAG…FHLS, VLSS…AFVV, and SFAL…HGSR.

This sequence belongs to the PsbB/PsbC family. PsbB subfamily. PSII is composed of 1 copy each of membrane proteins PsbA, PsbB, PsbC, PsbD, PsbE, PsbF, PsbH, PsbI, PsbJ, PsbK, PsbL, PsbM, PsbT, PsbX, PsbY, PsbZ, Psb30/Ycf12, at least 3 peripheral proteins of the oxygen-evolving complex and a large number of cofactors. It forms dimeric complexes. Binds multiple chlorophylls. PSII binds additional chlorophylls, carotenoids and specific lipids. serves as cofactor.

It localises to the plastid. The protein localises to the chloroplast thylakoid membrane. Functionally, one of the components of the core complex of photosystem II (PSII). It binds chlorophyll and helps catalyze the primary light-induced photochemical processes of PSII. PSII is a light-driven water:plastoquinone oxidoreductase, using light energy to abstract electrons from H(2)O, generating O(2) and a proton gradient subsequently used for ATP formation. The chain is Photosystem II CP47 reaction center protein from Lobularia maritima (Sweet alyssum).